Here is a 395-residue protein sequence, read N- to C-terminus: MANDYFFTSESVSEGHPDKVADQISDAILDAILEQDKYSRVAAETLCNTGLVVLAGEITTTANIDYIQIARDTIKRIGYDNTDYGIDYKGCAVLVAYDKQSPDIAQGVDRAHDDNLDQGAGDQGLMFGYACDETPELMPLPIYLSHRLVERQASLRRDGRLPWLRPDAKSQVTIRYVDGKPDSIDTVVLSTQHAPDIELPALREAVIEEIIKPTLPADLIKGDIKFLVNPTGRFVIGGPQGDCGLTGRKIIVDTYGGAAPHGGGAFSGKDPSKVDRSAAYAGRYVAKNIVAAGLASRALIQVSYAIGVAEPTSVMVNTFGTGRVSDAVITKLVREHFDLRPKGIIKMLDLLRPIYEKTAAYGHFGREEPEFSWEATDKALALAEAAGVEPTARVA.

Position 16 (His-16) interacts with ATP. A Mg(2+)-binding site is contributed by Asp-18. Glu-44 lines the K(+) pocket. L-methionine-binding residues include Glu-57 and Gln-100. The tract at residues 100–110 (QSPDIAQGVDR) is flexible loop. ATP is bound by residues 167–169 (DAK), 233–234 (RF), Asp-242, 248–249 (RK), Ala-265, and Lys-269. Asp-242 is a binding site for L-methionine. Lys-273 contributes to the L-methionine binding site.

This sequence belongs to the AdoMet synthase family. As to quaternary structure, homotetramer; dimer of dimers. Mg(2+) serves as cofactor. It depends on K(+) as a cofactor.

Its subcellular location is the cytoplasm. It catalyses the reaction L-methionine + ATP + H2O = S-adenosyl-L-methionine + phosphate + diphosphate. It participates in amino-acid biosynthesis; S-adenosyl-L-methionine biosynthesis; S-adenosyl-L-methionine from L-methionine: step 1/1. Catalyzes the formation of S-adenosylmethionine (AdoMet) from methionine and ATP. The overall synthetic reaction is composed of two sequential steps, AdoMet formation and the subsequent tripolyphosphate hydrolysis which occurs prior to release of AdoMet from the enzyme. The chain is S-adenosylmethionine synthase from Burkholderia vietnamiensis (strain G4 / LMG 22486) (Burkholderia cepacia (strain R1808)).